The following is a 178-amino-acid chain: Large ribosomal subunit protein uL6 (178 aa).

It belongs to the universal ribosomal protein uL6 family. In terms of assembly, part of the 50S ribosomal subunit.

This protein binds to the 23S rRNA, and is important in its secondary structure. It is located near the subunit interface in the base of the L7/L12 stalk, and near the tRNA binding site of the peptidyltransferase center. The polypeptide is Large ribosomal subunit protein uL6 (Campylobacter jejuni subsp. doylei (strain ATCC BAA-1458 / RM4099 / 269.97)).